The primary structure comprises 377 residues: Mitogen-activated protein kinase mpkC (377 aa).

One can recognise a Protein kinase domain in the interval 20 to 299 (YVNPQPIGMG…AQDALRHPYL (280 aa)). Residues 26-34 (IGMGSFGLV) and lysine 49 each bind ATP. Catalysis depends on aspartate 141, which acts as the Proton acceptor. Position 171 is a phosphothreonine (threonine 171). Positions 171 to 173 (TGY) match the TXY motif. Tyrosine 173 carries the post-translational modification Phosphotyrosine.

The protein belongs to the protein kinase superfamily. Ser/Thr protein kinase family. MAP kinase subfamily. HOG1 sub-subfamily. The cofactor is Mg(2+). In terms of processing, dually phosphorylated on Thr-171 and Tyr-173, which activates the enzyme.

It catalyses the reaction L-seryl-[protein] + ATP = O-phospho-L-seryl-[protein] + ADP + H(+). The enzyme catalyses L-threonyl-[protein] + ATP = O-phospho-L-threonyl-[protein] + ADP + H(+). Activated by tyrosine and threonine phosphorylation. Functionally, mitogen-activated protein kinase required for growth on media where sorbitol or mannitol is the sole carbon source. This is Mitogen-activated protein kinase mpkC (mpkc) from Neosartorya fischeri (strain ATCC 1020 / DSM 3700 / CBS 544.65 / FGSC A1164 / JCM 1740 / NRRL 181 / WB 181) (Aspergillus fischerianus).